We begin with the raw amino-acid sequence, 444 residues long: MAPQARGLGLCSLLALQASLAAVFITQEEAHSVLRRQRRANSFLEELRPGSLERECKEELCSFEEAREVFQSTERTKQFWITYNDGDQCASNPCQNGGSCEDQIQSYICFCLADFEGRNCEKNKNDQLICMYENGGCEQYCSDHVGSQRSCRCHEGYTLLPNGVSCTPTVDYPCGKVPALEKRGASNPQGRIVGGKVCPKGECPWQAALMNGSTLLCGGSLLDTHWVVSAAHCFDKLSSLRNLTIVLGEHDLSEHEGDEQVRHVAQLIMPDKYVPGKTDHDIALLRLLQPAALTNNVVPLCLPERNFSESTLATIRFSRVSGWGQLLYRGALARELMAIDVPRLMTQDCVEQSEHKPGSPEVTGNMFCAGYLDGSKDACKGDSGGPHATSYHGTWYLTGVVSWGEGCAAVGHVGVYTRVSRYTEWLSRLMRSKLHHGIQRHPFP.

An N-terminal signal peptide occupies residues methionine 1 to alanine 21. The propeptide occupies alanine 22 to arginine 39. The 45-residue stretch at alanine 40–asparagine 84 folds into the Gla domain. Glutamate 45, glutamate 46, glutamate 53, glutamate 55, glutamate 58, glutamate 59, glutamate 64, glutamate 65, glutamate 68, and glutamate 74 each carry 4-carboxyglutamate. Cysteine 56 and cysteine 61 are oxidised to a cystine. One can recognise an EGF-like 1; calcium-binding domain in the interval aspartate 85 to glutamate 121. 9 disulfide bridges follow: cysteine 89/cysteine 100, cysteine 94/cysteine 109, cysteine 111/cysteine 120, cysteine 130/cysteine 141, cysteine 137/cysteine 151, cysteine 153/cysteine 166, cysteine 174/cysteine 301, cysteine 198/cysteine 203, and cysteine 217/cysteine 233. The O-linked (Glc...) serine; alternate glycan is linked to serine 91. Serine 91 is a glycosylation site (O-linked (Xyl...) serine; alternate). Serine 99 carries an O-linked (Fuc) serine glycan. (3R)-3-hydroxyaspartate is present on aspartate 102. Residues aspartate 126–threonine 167 form the EGF-like 2 domain. The Peptidase S1 domain occupies isoleucine 192–arginine 431. An N-linked (GlcNAc...) asparagine glycan is attached at asparagine 211. Catalysis depends on histidine 232, which acts as the Charge relay system. Asparagine 242 carries N-linked (GlcNAc...) asparagine glycosylation. Aspartate 281 serves as the catalytic Charge relay system. Asparagine 306 is a glycosylation site (N-linked (GlcNAc...) asparagine). Cysteines 349 and 368 form a disulfide. Aspartate 377 contributes to the substrate binding site. Cysteine 379 and cysteine 407 are joined by a disulfide. The active-site Charge relay system is serine 383.

This sequence belongs to the peptidase S1 family. Heterodimer of a light chain and a heavy chain linked by a disulfide bond. Post-translationally, the vitamin K-dependent, enzymatic carboxylation of some glutamate residues allows the modified protein to bind calcium. In terms of processing, the iron and 2-oxoglutarate dependent 3-hydroxylation of aspartate and asparagine is (R) stereospecific within EGF domains. O-glycosylated. O-fucosylated by POFUT1 on a conserved serine or threonine residue found in the consensus sequence C2-X(4,5)-[S/T]-C3 of EGF domains, where C2 and C3 are the second and third conserved cysteines. Post-translationally, can be either O-glucosylated or O-xylosylated at Ser-91 by POGLUT1. In terms of tissue distribution, plasma.

The protein localises to the secreted. It carries out the reaction Selective cleavage of Arg-|-Ile bond in factor X to form factor Xa.. Its function is as follows. Initiates the extrinsic pathway of blood coagulation. Serine protease that circulates in the blood in a zymogen form. Factor VII is converted to factor VIIa by factor Xa, factor XIIa, factor IXa, or thrombin by minor proteolysis. In the presence of tissue factor and calcium ions, factor VIIa then converts factor X to factor Xa by limited proteolysis. Factor VIIa also converts factor IX to factor IXa in the presence of tissue factor and calcium. The protein is Coagulation factor VII (F7) of Oryctolagus cuniculus (Rabbit).